Consider the following 457-residue polypeptide: MDHLPIFCQLRDRDCLIVGGGDVAERKARLLLEAGARLTVNALTFIPQFTVWANEGMLTLVKGPFDETLLDSCWLAIAATDDDTVNQRVSDAAESRRIFCNVVDAPKAASFIMPSIIDRSPLMVAVSSGGTSPVLARLLREKLESLLPQHLGQVARYAGQLRARVKKQFATMGERRRFWEKFFVNDRLAQSLANADEKAVNATTERLFSEPLDHRGEVVLVGAGPGDAGLLTLKGLQQIQQADIVVYDRLVSDDIMNLVRRDADRVFVGKRAGYHCVPQEEINQILLREAQKGKRVVRLKGGDPFIFGRGGEELETLCHAGIPFSVVPGITAASGCSAYSGIPLTHRDYAQSVRLVTGHLKTGGELDWENLAAEKQTLVFYMGLNQAATIQEKLIAFGMQADMPVALVENGTSVKQRVVHGVLTQLGELAQQVESPALIIVGRVVGLRDKLNWFSNY.

The segment at 1–204 (MDHLPIFCQL…ADEKAVNATT (204 aa)) is precorrin-2 dehydrogenase /sirohydrochlorin ferrochelatase. NAD(+) contacts are provided by residues 22–23 (DV) and 43–44 (LT). Phosphoserine is present on Ser128. The segment at 216–457 (GEVVLVGAGP…RDKLNWFSNY (242 aa)) is uroporphyrinogen-III C-methyltransferase. An S-adenosyl-L-methionine-binding site is contributed by Pro225. The active-site Proton acceptor is the Asp248. Lys270 acts as the Proton donor in catalysis. S-adenosyl-L-methionine-binding positions include 301–303 (GGD), Ile306, 331–332 (TA), Met382, and Gly411.

It in the N-terminal section; belongs to the precorrin-2 dehydrogenase / sirohydrochlorin ferrochelatase family. In the C-terminal section; belongs to the precorrin methyltransferase family.

The catalysed reaction is uroporphyrinogen III + 2 S-adenosyl-L-methionine = precorrin-2 + 2 S-adenosyl-L-homocysteine + H(+). The enzyme catalyses precorrin-2 + NAD(+) = sirohydrochlorin + NADH + 2 H(+). It catalyses the reaction siroheme + 2 H(+) = sirohydrochlorin + Fe(2+). It functions in the pathway cofactor biosynthesis; adenosylcobalamin biosynthesis; precorrin-2 from uroporphyrinogen III: step 1/1. Its pathway is cofactor biosynthesis; adenosylcobalamin biosynthesis; sirohydrochlorin from precorrin-2: step 1/1. It participates in porphyrin-containing compound metabolism; siroheme biosynthesis; precorrin-2 from uroporphyrinogen III: step 1/1. The protein operates within porphyrin-containing compound metabolism; siroheme biosynthesis; siroheme from sirohydrochlorin: step 1/1. It functions in the pathway porphyrin-containing compound metabolism; siroheme biosynthesis; sirohydrochlorin from precorrin-2: step 1/1. Functionally, multifunctional enzyme that catalyzes the SAM-dependent methylations of uroporphyrinogen III at position C-2 and C-7 to form precorrin-2 via precorrin-1. Then it catalyzes the NAD-dependent ring dehydrogenation of precorrin-2 to yield sirohydrochlorin. Finally, it catalyzes the ferrochelation of sirohydrochlorin to yield siroheme. The polypeptide is Siroheme synthase (Salmonella dublin (strain CT_02021853)).